Here is a 162-residue protein sequence, read N- to C-terminus: Shikimate kinase (162 aa).

10 to 15 lines the ATP pocket; the sequence is GAGKST. Ser-14 serves as a coordination point for Mg(2+). Substrate is bound by residues Asp-28, Arg-52, and Gly-73. Residue Arg-113 participates in ATP binding. Position 129 (Arg-129) interacts with substrate.

It belongs to the shikimate kinase family. As to quaternary structure, monomer. Requires Mg(2+) as cofactor.

It is found in the cytoplasm. It catalyses the reaction shikimate + ATP = 3-phosphoshikimate + ADP + H(+). The protein operates within metabolic intermediate biosynthesis; chorismate biosynthesis; chorismate from D-erythrose 4-phosphate and phosphoenolpyruvate: step 5/7. Its function is as follows. Catalyzes the specific phosphorylation of the 3-hydroxyl group of shikimic acid using ATP as a cosubstrate. This chain is Shikimate kinase, found in Lactococcus lactis subsp. lactis (strain IL1403) (Streptococcus lactis).